The sequence spans 673 residues: Beta-galactosidase GalA (673 aa).

Arg105 is a binding site for substrate. Cys109 is a Zn(2+) binding site. Residue Asn143 coordinates substrate. Glu144 (proton donor) is an active-site residue. Residues Cys149, Cys151, and Cys154 each coordinate Zn(2+). Glu308 functions as the Nucleophile in the catalytic mechanism. Substrate is bound by residues Trp316 and 356 to 359 (EKFH).

The protein belongs to the glycosyl hydrolase 42 family. Homodimer.

It carries out the reaction Hydrolysis of terminal non-reducing beta-D-galactose residues in beta-D-galactosides.. Inhibited by hydrolysis end products D-galactose and D-glucose. The hydrolysis of o-nitrophenyl-beta-D-galactopyranoside (ONPG) is slightly activated by monovalent ions, Na(+) and K(+). Concentrations of these ions in the range of 1-100 mM exert the stimulating effects. The presence of 1 mM Mn(2+) together with the presence of 10 mM Na(+) slightly stimulates the activity, while presence of 10 mM Mn(2+) inhibits the activity by about 40%. Catalyzes the hydrolysis of lactose to its constituent monosaccharides glucose and galactose. Possesses a low level of transgalactosylation activity for the production of galacto-oligosaccharides (GOS) from lactose. This Bacillus licheniformis (strain ATCC 14580 / DSM 13 / JCM 2505 / CCUG 7422 / NBRC 12200 / NCIMB 9375 / NCTC 10341 / NRRL NRS-1264 / Gibson 46) protein is Beta-galactosidase GalA.